The sequence spans 437 residues: MSSLIPISTYNLALQPFNPVQAIDDEYPVTIRLTLAAVDPEAVDDKAEPSTLRLLKRSNLFVDDEDLDDDLLDIEAEEADELDSEEEEEEVKPKNKKKQNKKKVEEEEEDEDEEDLDIDGSSDEEDDEDVSEFVVCTLSPKVQFQQTIDLTITPDEEVYFVVTGSYPVHLTGNYVEHPADEDSEDEYDEDSEDDYNLTPDEDEIIGGEEYDLDDLEDASDIENKIEELVEEEAQGSKKRNAEEPEAPTSKKSKKAKKEDKKSVQFTKDLEQGPTGSTLVEEKTEKKGKKEKAKKEEPKKEEPKKEQPKKEQPKKEQPKKEEASKKFPTKTLLGGVVTEDRKTGKGQTAKSGNKVGIRYIGKLKNGKVFDKNTSGKPFVFGLGKGECIKGFDLGVAGMAVGGERRVVIPPKMGYGSQALPGLPANSELTFDIKLVSIK.

Acidic residues-rich tracts occupy residues 73–90 (DIEA…EEEE), 106–131 (EEEE…EDVS), and 179–220 (ADED…DASD). 2 disordered regions span residues 73-132 (DIEA…DVSE) and 169-349 (HLTG…QTAK). 2 stretches are compositionally biased toward basic and acidic residues: residues 256-270 (KKED…KDLE) and 292-324 (AKKE…EASK). The PPIase FKBP-type domain occupies 351 to 437 (GNKVGIRYIG…TFDIKLVSIK (87 aa)).

The protein belongs to the FKBP-type PPIase family. FKBP3/4 subfamily.

It is found in the nucleus. The protein resides in the nucleolus. It carries out the reaction [protein]-peptidylproline (omega=180) = [protein]-peptidylproline (omega=0). Its activity is regulated as follows. Inhibited by both FK506 and rapamycin. In terms of biological role, PPIases accelerate the folding of proteins. It catalyzes the cis-trans isomerization of proline imidic peptide bonds in oligopeptides. This is FK506-binding protein 3 (FPR3) from Debaryomyces hansenii (strain ATCC 36239 / CBS 767 / BCRC 21394 / JCM 1990 / NBRC 0083 / IGC 2968) (Yeast).